A 370-amino-acid polypeptide reads, in one-letter code: Early nodulin-like protein 1 (370 aa).

Residues 1-27 (MSAIMKSLCFSFLILASFATFFSVADA) form the signal peptide. A Phytocyanin domain is found at 28 to 129 (WRFNVGGNGA…GQKLIVVVLA (102 aa)). N-linked (GlcNAc...) asparagine glycosylation occurs at Asn58. An intrachain disulfide couples Cys83 to Cys117. Low complexity predominate over residues 135 to 175 (SAPAHSPVPSVSPTQPPKSHSPVSPVAPASAPSKSQPPRSS). Residues 135 to 347 (SAPAHSPVPS…PAPSPRTNSA (213 aa)) are disordered. Polar residues predominate over residues 176 to 194 (VSPAQPPKSSSPISHTPAL). Low complexity-rich tracts occupy residues 195–205 (SPSHATSHSPA) and 215–290 (SPVS…QSPA). The segment covering 291–305 (TPSPMTPQSPSPVSS) has biased composition (pro residues). Positions 306-318 (PSPDQSAAPSDQS) are enriched in low complexity. The span at 319–334 (TPLAPSPSETTPTADN) shows a compositional bias: polar residues. Asn334 is a glycosylation site (N-linked (GlcNAc...) asparagine). Asn345 carries GPI-anchor amidated asparagine lipidation. The propeptide at 346-370 (SASGLAVTSVMSTLFSATFTFLMFA) is removed in mature form.

This sequence belongs to the early nodulin-like (ENODL) family. In terms of tissue distribution, mostly expressed in stems, leaves and flowers, and, to a lower extent, in seedlings, roots and seeds.

The protein resides in the cell membrane. Its function is as follows. May act as a carbohydrate transporter. The chain is Early nodulin-like protein 1 from Arabidopsis thaliana (Mouse-ear cress).